The following is a 416-amino-acid chain: Antigen EG13 (416 aa).

Positions 1–247 (MIQERADIEK…TVAKVDADAD (247 aa)) constitute an F-BAR domain. A disordered region spans residues 297-327 (LKTFTSPDRGGPIPGTTDSGSNISTSPVHTT). Polar residues predominate over residues 312-327 (TTDSGSNISTSPVHTT). The SH3 domain occupies 361–416 (RPGVPIRALYDYVGVEADELSFNSGDLFEKLEDEDEQGWCKGRKDGRVGLYPRQLR).

The protein is Antigen EG13 (EG13) of Echinococcus granulosus (Hydatid tapeworm).